Here is a 59-residue protein sequence, read N- to C-terminus: Large ribosomal subunit protein bL32 (59 aa).

Residues 1–20 (MAVQQNKKSKSKKGMRRSHD) form a disordered region. The segment covering 7–19 (KKSKSKKGMRRSH) has biased composition (basic residues).

The protein belongs to the bacterial ribosomal protein bL32 family.

The protein is Large ribosomal subunit protein bL32 of Nitratidesulfovibrio vulgaris (strain DSM 19637 / Miyazaki F) (Desulfovibrio vulgaris).